A 715-amino-acid polypeptide reads, in one-letter code: Protein MTSS 2 (715 aa).

In terms of domain architecture, IMD spans 1-249; that stretch reads METAEKECGA…EQVIKDLKGS (249 aa). The stretch at 134 to 156 forms a coiled coil; it reads HEIKKKSSDTLKLQKKARKGKGD. Composition is skewed to low complexity over residues 253-274, 284-295, and 312-330; these read WSYQ…SMCS, SSVSSHDSGFVS, and TSQK…TCQS. Disordered regions lie at residues 253-405, 420-485, and 527-562; these read WSYQ…EVSP, LEHQ…RNSN, and IRRT…PTVP. Threonine 257 carries the post-translational modification Phosphothreonine. The residue at position 261 (serine 261) is a Phosphoserine. Residues 331-341 show a composition bias toward polar residues; the sequence is VSECSSPTSDW. Positions 360–369 are enriched in basic and acidic residues; it reads DRVEHLRDTE. A Phosphoserine modification is found at serine 404. A compositionally biased stretch (low complexity) spans 429–442; it reads SLQYSSGYSTQTTT. Residues 443–455 show a composition bias toward polar residues; sequence PSCSEDTIPSQGS. Residues serine 542, serine 564, serine 575, serine 587, serine 597, and serine 602 each carry the phosphoserine modification. Threonine 606 carries the post-translational modification Phosphothreonine. A disordered region spans residues 661–690; sequence FPFPTALSATPSEETPTPPPAATSDPPAED. The WH2 domain occupies 687-704; it reads PAEDMLVAIRRGVRLRRT.

Belongs to the MTSS family. In terms of assembly, interacts (via IMD domain) with RAC1; this interaction may be important to potentiate PDGF-induced RAC1 activation.

The protein resides in the cytoplasm. It localises to the cell projection. Its subcellular location is the ruffle. Its function is as follows. Involved in plasma membrane dynamics. Potentiated PDGF-mediated formation of membrane ruffles and lamellipodia in fibroblasts, acting via RAC1 activation. May function in actin bundling. The sequence is that of Protein MTSS 2 (Mtss2) from Mus musculus (Mouse).